Reading from the N-terminus, the 96-residue chain is Co-chaperonin GroES (96 aa).

The protein belongs to the GroES chaperonin family. Heptamer of 7 subunits arranged in a ring. Interacts with the chaperonin GroEL.

The protein localises to the cytoplasm. Its function is as follows. Together with the chaperonin GroEL, plays an essential role in assisting protein folding. The GroEL-GroES system forms a nano-cage that allows encapsulation of the non-native substrate proteins and provides a physical environment optimized to promote and accelerate protein folding. GroES binds to the apical surface of the GroEL ring, thereby capping the opening of the GroEL channel. This is Co-chaperonin GroES from Aromatoleum aromaticum (strain DSM 19018 / LMG 30748 / EbN1) (Azoarcus sp. (strain EbN1)).